A 347-amino-acid chain; its full sequence is Protein RecA (347 aa).

65–72 is a binding site for ATP; sequence GPESSGKT.

The protein belongs to the RecA family.

It is found in the cytoplasm. Can catalyze the hydrolysis of ATP in the presence of single-stranded DNA, the ATP-dependent uptake of single-stranded DNA by duplex DNA, and the ATP-dependent hybridization of homologous single-stranded DNAs. It interacts with LexA causing its activation and leading to its autocatalytic cleavage. This Stutzerimonas stutzeri (Pseudomonas stutzeri) protein is Protein RecA.